We begin with the raw amino-acid sequence, 165 residues long: 2-C-methyl-D-erythritol 2,4-cyclodiphosphate synthase (165 aa).

D13 and H15 together coordinate a divalent metal cation. Residues D13–H15 and H39–S40 contribute to the 4-CDP-2-C-methyl-D-erythritol 2-phosphate site. H47 lines the a divalent metal cation pocket. Residues D61–G63 and F141 contribute to the 4-CDP-2-C-methyl-D-erythritol 2-phosphate site.

This sequence belongs to the IspF family. As to quaternary structure, homotrimer. A divalent metal cation serves as cofactor.

It carries out the reaction 4-CDP-2-C-methyl-D-erythritol 2-phosphate = 2-C-methyl-D-erythritol 2,4-cyclic diphosphate + CMP. It functions in the pathway isoprenoid biosynthesis; isopentenyl diphosphate biosynthesis via DXP pathway; isopentenyl diphosphate from 1-deoxy-D-xylulose 5-phosphate: step 4/6. Functionally, involved in the biosynthesis of isopentenyl diphosphate (IPP) and dimethylallyl diphosphate (DMAPP), two major building blocks of isoprenoid compounds. Catalyzes the conversion of 4-diphosphocytidyl-2-C-methyl-D-erythritol 2-phosphate (CDP-ME2P) to 2-C-methyl-D-erythritol 2,4-cyclodiphosphate (ME-CPP) with a corresponding release of cytidine 5-monophosphate (CMP). This is 2-C-methyl-D-erythritol 2,4-cyclodiphosphate synthase from Thermotoga maritima (strain ATCC 43589 / DSM 3109 / JCM 10099 / NBRC 100826 / MSB8).